Consider the following 369-residue polypeptide: Uroporphyrinogen decarboxylase (369 aa).

Substrate-binding positions include arginine 28–arginine 32, aspartate 78, tyrosine 154, serine 209, and histidine 339.

Belongs to the uroporphyrinogen decarboxylase family. As to quaternary structure, homodimer.

The protein localises to the cytoplasm. The enzyme catalyses uroporphyrinogen III + 4 H(+) = coproporphyrinogen III + 4 CO2. It functions in the pathway porphyrin-containing compound metabolism; protoporphyrin-IX biosynthesis; coproporphyrinogen-III from 5-aminolevulinate: step 4/4. Its function is as follows. Catalyzes the decarboxylation of four acetate groups of uroporphyrinogen-III to yield coproporphyrinogen-III. In Polaromonas naphthalenivorans (strain CJ2), this protein is Uroporphyrinogen decarboxylase.